Here is a 156-residue protein sequence, read N- to C-terminus: MSRRHSAEKREVLPDPKFGNIVITKFMNSVMYAGKKSVAEGIVYGALGIIETKTKQNPLGVFEQALENVMPTIEVRSRRVGGATYQVPVEVRSTRRQALGIRWLISAARERNEKTMTERLSAELLDASNNRGNAVKKREDVHRMAEANRAFSHYRW.

It belongs to the universal ribosomal protein uS7 family. Part of the 30S ribosomal subunit. Contacts proteins S9 and S11.

Functionally, one of the primary rRNA binding proteins, it binds directly to 16S rRNA where it nucleates assembly of the head domain of the 30S subunit. Is located at the subunit interface close to the decoding center, probably blocks exit of the E-site tRNA. This is Small ribosomal subunit protein uS7 from Bradyrhizobium diazoefficiens (strain JCM 10833 / BCRC 13528 / IAM 13628 / NBRC 14792 / USDA 110).